A 561-amino-acid chain; its full sequence is Potassium-transporting ATPase potassium-binding subunit (561 aa).

12 consecutive transmembrane segments (helical) span residues 1 to 21, 62 to 82, 132 to 152, 173 to 193, 253 to 273, 283 to 303, 327 to 347, 356 to 376, 379 to 399, 416 to 436, 483 to 503, and 526 to 546; these read MMAS…LLAR, YLLA…LILM, GLTV…FALM, ITLY…VSQG, FVQM…FGDV, LLWS…WAEV, FGIL…CGAV, ALGG…FGGV, GLYG…LMIG, MTAL…ALAM, MLLA…VLAI, and LFIA…FIPA.

It belongs to the KdpA family. As to quaternary structure, the system is composed of three essential subunits: KdpA, KdpB and KdpC.

Its subcellular location is the cell inner membrane. Its function is as follows. Part of the high-affinity ATP-driven potassium transport (or Kdp) system, which catalyzes the hydrolysis of ATP coupled with the electrogenic transport of potassium into the cytoplasm. This subunit binds the periplasmic potassium ions and delivers the ions to the membrane domain of KdpB through an intramembrane tunnel. This chain is Potassium-transporting ATPase potassium-binding subunit, found in Erwinia tasmaniensis (strain DSM 17950 / CFBP 7177 / CIP 109463 / NCPPB 4357 / Et1/99).